Here is a 970-residue protein sequence, read N- to C-terminus: Protein CLASP-3 (970 aa).

Disordered regions lie at residues 314–377 (SRLA…QKAR) and 651–675 (NGISSGSGGSGNNHPKATPLRETPH). Polar residues predominate over residues 344 to 355 (GSRTRTSSITSN). One copy of the HEAT repeat lies at 905–943 (ITPCVIKAYQSTSSSVRKTVVYCLVAMVNRVGEQRMAPH).

Belongs to the CLASP family.

The protein localises to the cytoplasm. Its subcellular location is the cytoskeleton. Functionally, microtubule plus-end tracking protein that promotes the stabilization of dynamic microtubules. In Caenorhabditis briggsae, this protein is Protein CLASP-3 (cls-3).